The primary structure comprises 244 residues: tRNA (guanine-N(1)-)-methyltransferase (244 aa).

S-adenosyl-L-methionine contacts are provided by residues Gly-114 and 134-139 (IGDYVL). The disordered stretch occupies residues 220-244 (RRPDLLEKAGASPGKSGSNFGKHDA).

It belongs to the RNA methyltransferase TrmD family. Homodimer.

The protein localises to the cytoplasm. The enzyme catalyses guanosine(37) in tRNA + S-adenosyl-L-methionine = N(1)-methylguanosine(37) in tRNA + S-adenosyl-L-homocysteine + H(+). Functionally, specifically methylates guanosine-37 in various tRNAs. This is tRNA (guanine-N(1)-)-methyltransferase from Rhizobium johnstonii (strain DSM 114642 / LMG 32736 / 3841) (Rhizobium leguminosarum bv. viciae).